Here is a 221-residue protein sequence, read N- to C-terminus: Ribosomal RNA small subunit methyltransferase G 3 (221 aa).

Residues glycine 85, phenylalanine 90, 136-137 (IE), and arginine 150 each bind S-adenosyl-L-methionine.

Belongs to the methyltransferase superfamily. RNA methyltransferase RsmG family.

The protein resides in the cytoplasm. The catalysed reaction is guanosine(527) in 16S rRNA + S-adenosyl-L-methionine = N(7)-methylguanosine(527) in 16S rRNA + S-adenosyl-L-homocysteine. Functionally, specifically methylates the N7 position of guanine in position 527 of 16S rRNA. The polypeptide is Ribosomal RNA small subunit methyltransferase G 3 (Bdellovibrio bacteriovorus (strain ATCC 15356 / DSM 50701 / NCIMB 9529 / HD100)).